The chain runs to 85 residues: Putative membrane protein insertion efficiency factor (85 aa).

Belongs to the UPF0161 family.

It is found in the cell inner membrane. Its function is as follows. Could be involved in insertion of integral membrane proteins into the membrane. The chain is Putative membrane protein insertion efficiency factor from Shewanella sediminis (strain HAW-EB3).